A 488-amino-acid chain; its full sequence is 1-aminocyclopropane-1-carboxylate synthase-like protein 1 (488 aa).

Lys-273 bears the N6-(pyridoxal phosphate)lysine mark.

The protein belongs to the class-I pyridoxal-phosphate-dependent aminotransferase family. Homodimer. As to expression, expressed in young leaves and flowers. Not expressed in roots.

This chain is 1-aminocyclopropane-1-carboxylate synthase-like protein 1 (ACS1), found in Arabidopsis thaliana (Mouse-ear cress).